Consider the following 378-residue polypeptide: MSHVDDGFRSLTLKRFPQTDDVNPLLAWEAADEYLLQQLDETEIRGPVLILNDTFGALSCALAEHSPYSIGDSYLSELGTRENLRHNGIAESSVMFLDSTADYPQAPGVVLIKVPKTLALLEQQLRALRKVVTAQTRIIAGAKARDIHTSTLELFEKVLGPTTTTLAWKKARLINCTFSNPQLADAPQTLSWKLEDTGWTIHNHANVFSRTGLDIGARFFMQHLPENLEGEIVDLGCGNGVIGLSLLAKNPQANVVFVDESPMAVDSSRLNVETNMPEAFERCEFMINNALSGVEPYRFNAVFCNPPFHQKHALTDNIAWEMFHHARRCLKINGELYIVANRHLDYFHKLKKIFGNCATIATNNKFVILKAVKPGRRR.

This sequence belongs to the methyltransferase superfamily. RlmG family.

The protein localises to the cytoplasm. It carries out the reaction guanosine(1835) in 23S rRNA + S-adenosyl-L-methionine = N(2)-methylguanosine(1835) in 23S rRNA + S-adenosyl-L-homocysteine + H(+). Functionally, specifically methylates the guanine in position 1835 (m2G1835) of 23S rRNA. In Salmonella arizonae (strain ATCC BAA-731 / CDC346-86 / RSK2980), this protein is Ribosomal RNA large subunit methyltransferase G.